Reading from the N-terminus, the 203-residue chain is MEGARLIIEEINKEAEQKIKYILEEAEQKAEKIKQEAEKKARIKADWIIRKAQTQAELEKQRIIANAKLEVRRKKLVLQEELINEVIGAIKDRLLSIPEAEYMEILKDLIVTGIRELGEEKVVLSSNGETLSLLKAHLKEMEESVNEKLGKDITISLGEPIETIGGVIVQNLEKTIRIDNTFEARMERLQADLRTKIAKILFG.

The protein belongs to the V-ATPase E subunit family. Has multiple subunits with at least A(3), B(3), C, D, E, F, H, I and proteolipid K(x).

Its subcellular location is the cell membrane. Functionally, component of the A-type ATP synthase that produces ATP from ADP in the presence of a proton gradient across the membrane. In Thermococcus sibiricus (strain DSM 12597 / MM 739), this protein is A-type ATP synthase subunit E.